The chain runs to 360 residues: MPLSRLIINNFRNLQSLDLELSPNFNFIVGHNGSGKTSLLEAIFYLGHGRSFKSHISNRIIHYQAEDFVLHARIDEGQHQWSVGIQKKRSGDTLLKINGEDGNKISDLAHLLPMQVITPEGLTLLNGGPTFRRAFLDWGLFHQYTEFYSCWANLKRLLKQRNAALHQVRSYAELKPWDIELAKLAEIVSQMRASYAEALRPEIEKTCQFFLPELEIGVSFHQGWEKGTDYAEILAQGFERDKAMGYTMIGPQKADFRFRANGLPVEDVLSRGQLKLLMCALRLAQGEYLVAQKERQCLFLIDDFASELDPIKRELLAHRLRESGSQVFVTAITKDQLNQMQWQESEQDSLFQVQQGMLTK.

30-37 (GHNGSGKT) provides a ligand contact to ATP.

Belongs to the RecF family.

It localises to the cytoplasm. In terms of biological role, the RecF protein is involved in DNA metabolism; it is required for DNA replication and normal SOS inducibility. RecF binds preferentially to single-stranded, linear DNA. It also seems to bind ATP. In Actinobacillus pleuropneumoniae serotype 3 (strain JL03), this protein is DNA replication and repair protein RecF.